The sequence spans 95 residues: Microcin E492 immunity protein (95 aa).

3 consecutive transmembrane segments (helical) span residues 1–21 (MTLL…FCII), 35–55 (VIVL…TKVY), and 67–87 (YLFC…ILTI).

This sequence belongs to the MceB microcin immunity protein family.

It is found in the cell inner membrane. Its function is as follows. Protect the producing cell against microcin E492. The protein is Microcin E492 immunity protein of Klebsiella pneumoniae.